Consider the following 231-residue polypeptide: Adenosylcobinamide-GDP ribazoletransferase (231 aa).

Helical transmembrane passes span 28-48, 97-117, 121-141, 162-182, and 209-229; these read LWLFPYAAILIALIVSVPHFI, TGAGGVAVVVVYFLLLYTLLY, FWEIALSQVLAKYSMLLLMLL, VFIGAVPVVLLCYKVGIESLA, and VIGSANCLTFAASLSALTIAG.

The protein belongs to the CobS family. Mg(2+) serves as cofactor.

It localises to the cell membrane. It catalyses the reaction alpha-ribazole + adenosylcob(III)inamide-GDP = adenosylcob(III)alamin + GMP + H(+). It carries out the reaction alpha-ribazole 5'-phosphate + adenosylcob(III)inamide-GDP = adenosylcob(III)alamin 5'-phosphate + GMP + H(+). The protein operates within cofactor biosynthesis; adenosylcobalamin biosynthesis; adenosylcobalamin from cob(II)yrinate a,c-diamide: step 7/7. In terms of biological role, joins adenosylcobinamide-GDP and alpha-ribazole to generate adenosylcobalamin (Ado-cobalamin). Also synthesizes adenosylcobalamin 5'-phosphate from adenosylcobinamide-GDP and alpha-ribazole 5'-phosphate. The polypeptide is Adenosylcobinamide-GDP ribazoletransferase (cobS2) (Archaeoglobus fulgidus (strain ATCC 49558 / DSM 4304 / JCM 9628 / NBRC 100126 / VC-16)).